The sequence spans 340 residues: Uridine nucleosidase (340 aa).

The active site involves His254.

This sequence belongs to the IUNH family.

The protein localises to the cytoplasm. Its subcellular location is the nucleus. It carries out the reaction uridine + H2O = D-ribose + uracil. Its function is as follows. Also acts on cytidine. The polypeptide is Uridine nucleosidase (URH1) (Saccharomyces cerevisiae (strain ATCC 204508 / S288c) (Baker's yeast)).